A 725-amino-acid chain; its full sequence is Phosphoribosylformylglycinamidine synthase subunit PurL (725 aa).

H34 is a catalytic residue. ATP is bound at residue Y37. E93 contacts Mg(2+). Substrate contacts are provided by residues S94 to H97 and R116. Catalysis depends on H95, which acts as the Proton acceptor. Residue D117 coordinates Mg(2+). The tract at residues G220–Q241 is disordered. Q241 serves as a coordination point for substrate. A Mg(2+)-binding site is contributed by D269. Substrate is bound at residue E313–Q315. ATP is bound by residues D489 and G526. N527 is a Mg(2+) binding site. Residue S529 participates in substrate binding.

Belongs to the FGAMS family. Monomer. Part of the FGAM synthase complex composed of 1 PurL, 1 PurQ and 2 PurS subunits.

The protein localises to the cytoplasm. It carries out the reaction N(2)-formyl-N(1)-(5-phospho-beta-D-ribosyl)glycinamide + L-glutamine + ATP + H2O = 2-formamido-N(1)-(5-O-phospho-beta-D-ribosyl)acetamidine + L-glutamate + ADP + phosphate + H(+). It functions in the pathway purine metabolism; IMP biosynthesis via de novo pathway; 5-amino-1-(5-phospho-D-ribosyl)imidazole from N(2)-formyl-N(1)-(5-phospho-D-ribosyl)glycinamide: step 1/2. Its function is as follows. Part of the phosphoribosylformylglycinamidine synthase complex involved in the purines biosynthetic pathway. Catalyzes the ATP-dependent conversion of formylglycinamide ribonucleotide (FGAR) and glutamine to yield formylglycinamidine ribonucleotide (FGAM) and glutamate. The FGAM synthase complex is composed of three subunits. PurQ produces an ammonia molecule by converting glutamine to glutamate. PurL transfers the ammonia molecule to FGAR to form FGAM in an ATP-dependent manner. PurS interacts with PurQ and PurL and is thought to assist in the transfer of the ammonia molecule from PurQ to PurL. This Haloquadratum walsbyi (strain DSM 16790 / HBSQ001) protein is Phosphoribosylformylglycinamidine synthase subunit PurL.